The chain runs to 312 residues: tRNA dimethylallyltransferase (312 aa).

Position 13 to 20 (13 to 20 (GPTAVGKT)) interacts with ATP. Residue 15-20 (TAVGKT) participates in substrate binding. Interaction with substrate tRNA stretches follow at residues 38–41 (DSVQ) and 163–167 (QRVVR).

It belongs to the IPP transferase family. As to quaternary structure, monomer. The cofactor is Mg(2+).

The enzyme catalyses adenosine(37) in tRNA + dimethylallyl diphosphate = N(6)-dimethylallyladenosine(37) in tRNA + diphosphate. Functionally, catalyzes the transfer of a dimethylallyl group onto the adenine at position 37 in tRNAs that read codons beginning with uridine, leading to the formation of N6-(dimethylallyl)adenosine (i(6)A). The sequence is that of tRNA dimethylallyltransferase from Exiguobacterium sibiricum (strain DSM 17290 / CCUG 55495 / CIP 109462 / JCM 13490 / 255-15).